Reading from the N-terminus, the 48-residue chain is Large ribosomal subunit protein bL36c (48 aa).

The protein belongs to the bacterial ribosomal protein bL36 family.

It localises to the plastid. The protein localises to the chloroplast. The sequence is that of Large ribosomal subunit protein bL36c (rpl36) from Guillardia theta (Cryptophyte).